Here is a 328-residue protein sequence, read N- to C-terminus: MSEAAGEIRNDWSVEEIVTLHNLPLLELIGHANAVHGRHHNPNVVQKASLLSIKTGGCPEDCAYCPQSAHHREVKLTKDRLMQPETVLALAKRAKDAGAERFCMGAAWRQVRDGKEFDAVLTMVRGVRDLGMEACVTLGMLEKHQAEKLAEAGLTAYNHNLDTSPEFYGEIITTRSYADRLETLSIVRSFGIDLCCGGIIGMGETIRDRASMLQVLASMRPHPESVPINALVPVEGTPLAAMPRIDPLELVRMVATARIVMPKSTVRLSAGRSTLNREAQILCLVSGANSVFYGDTLLTTPNAGIGEDEALFAAIGALPHEAAPLAAE.

Residues 43 to 272 (NVVQKASLLS…KSTVRLSAGR (230 aa)) enclose the Radical SAM core domain. [4Fe-4S] cluster contacts are provided by Cys-58, Cys-62, and Cys-65. [2Fe-2S] cluster-binding residues include Cys-103, Cys-135, Cys-195, and Arg-267.

The protein belongs to the radical SAM superfamily. Biotin synthase family. As to quaternary structure, homodimer. [4Fe-4S] cluster is required as a cofactor. It depends on [2Fe-2S] cluster as a cofactor.

It carries out the reaction (4R,5S)-dethiobiotin + (sulfur carrier)-SH + 2 reduced [2Fe-2S]-[ferredoxin] + 2 S-adenosyl-L-methionine = (sulfur carrier)-H + biotin + 2 5'-deoxyadenosine + 2 L-methionine + 2 oxidized [2Fe-2S]-[ferredoxin]. The protein operates within cofactor biosynthesis; biotin biosynthesis; biotin from 7,8-diaminononanoate: step 2/2. Its function is as follows. Catalyzes the conversion of dethiobiotin (DTB) to biotin by the insertion of a sulfur atom into dethiobiotin via a radical-based mechanism. This is Biotin synthase from Allorhizobium ampelinum (strain ATCC BAA-846 / DSM 112012 / S4) (Agrobacterium vitis (strain S4)).